A 218-amino-acid polypeptide reads, in one-letter code: Small ribosomal subunit protein uS3c (218 aa).

The KH type-2 domain maps to 47–118; that stretch reads VQKNMRIFSG…KLNIAITRIG (72 aa).

Belongs to the universal ribosomal protein uS3 family. As to quaternary structure, part of the 30S ribosomal subunit.

It localises to the plastid. It is found in the chloroplast. The sequence is that of Small ribosomal subunit protein uS3c (rps3) from Cucumis sativus (Cucumber).